The chain runs to 1018 residues: MDEDSSMVADNDQDREFQSLDGGQSPSPMERETPQQMNDQSPPPEGGSVPTPPPSDPNPATSQQQAAAVVGQEQQPALVVGPRCAPTYSVVDAMMDKKEDGPGPRCGHTLTAVPAVGDEGTPGYIGPRLVLFGGATALEGNSGGTGTPTSAGSAGIRLAGATADVHCYDVLSNKWTRLTPFGEPPTPRAAHVATAVGTMVVIQGGIGPAGLSAEDLHVLDLTQQRPRWHRVVVQGPGPGPRYGHVMALVGQRYLMAIGGNDGKRPLADVWALDTAAKPYEWRKLEPEGEGPPPCMYATASARSDGLLLLCGGRDANSVPLASAYGLAKHRDGRWEWAIAPGVSPSSRYQHAAVFVNARLHVSGGALGGGRMVEDSSSVAVLDTAAGVWCDTKSVVTSPRTGRYSADAAGGDASVELTRRCRHAAAAVGDLIFIYGGLRGGVLLDDLLVAEDLAAAETTYAASHAAAAAATNSPPGRLPGRYGFSDERNRELSESAADGAVVLGSPVAPPVNGDMHTDISPENALLPGTRRTNKGVEYLVEASAAEAEAISATLAAAKARQVNGEVELPDRDCGAEATPSGKPTFSLIKPDSMGSMSVTPAGIRLHHRAVVVAAETGGALGGMVRQLSIDQFENEGRRVSYGTPESATAARKLLDRQMSINSVPKKVIAHLLKPRGWKPPVRRQFFLDCNEIADLCDSAERIFASEPTVLQLKAPIKIFGDLHGQFGDLMRLFDEYGSPSTAGDISYIDYLFLGDYVDRGQHSLETISLLLALKVEYQHNVHLIRGNHEAADINALFGFRIECIERMGERDGIWVWHRINRLFNWLPLAASIEKKIICMHGGIGRSINHVEQIENIQRPITMEAGSIVLMDLLWSDPTENDSVEGLRPNARGPGLVTFGPDRVMEFCNNNDLQLIVRAHECVMDGFERFAQGHLITLFSATNYCGTANNAGAILVLGRDLVVVPKLIHPLPPALSSPETSPERHIEDTWMQELNANRPATPTRGRPQNSNDRGGSLAWM.

The segment at 1 to 75 is disordered; it reads MDEDSSMVAD…AAAVVGQEQQ (75 aa). Over residues 41–57 the composition is skewed to pro residues; sequence SPPPEGGSVPTPPPSDP. Residues 63–75 show a composition bias toward low complexity; it reads QQQAAAVVGQEQQ. Kelch repeat units lie at residues 149-195, 253-301, 306-356, 362-409, and 430-479; these read TSAG…VATA, YLMA…TASA, LLLL…VFVN, SGGA…DAAG, and LIFI…RLPG. The disordered stretch occupies residues 569–590; sequence DRDCGAEATPSGKPTFSLIKPD. Ser-627 bears the Phosphoserine mark. Mn(2+) contacts are provided by Asp-720, His-722, Asp-754, and Asn-786. His-787 acts as the Proton donor in catalysis. Residues His-839 and His-918 each contribute to the Mn(2+) site. Ser-975 carries the phosphoserine modification. Polar residues predominate over residues 994–1011; that stretch reads ANRPATPTRGRPQNSNDR. Residues 994 to 1018 are disordered; that stretch reads ANRPATPTRGRPQNSNDRGGSLAWM.

This sequence belongs to the PPP phosphatase family. BSU subfamily. In terms of assembly, interacts with BSK8. Requires Mn(2+) as cofactor. As to expression, expressed throughout the plant, with a higher level in younger parts.

It is found in the cytoplasm. The protein localises to the cell membrane. The protein resides in the nucleus. It carries out the reaction O-phospho-L-seryl-[protein] + H2O = L-seryl-[protein] + phosphate. The enzyme catalyses O-phospho-L-threonyl-[protein] + H2O = L-threonyl-[protein] + phosphate. Its function is as follows. Phosphatase involved in elongation process, probably by acting as a regulator of brassinolide signaling. This Arabidopsis thaliana (Mouse-ear cress) protein is Serine/threonine-protein phosphatase BSL2 (BSL2).